A 369-amino-acid polypeptide reads, in one-letter code: Type 2 DNA topoisomerase 6 subunit A (369 aa).

The Topo IIA-type catalytic domain occupies 11 to 149 (KGDALAREKL…FHMRPEEDGA (139 aa)). The O-(5'-phospho-DNA)-tyrosine intermediate role is filled by Tyr-106. The Mg(2+) site is built by Glu-202 and Asp-254.

This sequence belongs to the TOP6A family. In terms of assembly, homodimer. Heterotetramer of two Top6A and two Top6B chains. It depends on Mg(2+) as a cofactor.

It carries out the reaction ATP-dependent breakage, passage and rejoining of double-stranded DNA.. In terms of biological role, relaxes both positive and negative superturns and exhibits a strong decatenase activity. This chain is Type 2 DNA topoisomerase 6 subunit A, found in Methanosarcina mazei (strain ATCC BAA-159 / DSM 3647 / Goe1 / Go1 / JCM 11833 / OCM 88) (Methanosarcina frisia).